The following is a 131-amino-acid chain: Translation initiation factor 5A (131 aa).

Hypusine is present on K37.

The protein belongs to the eIF-5A family.

The protein localises to the cytoplasm. Functionally, functions by promoting the formation of the first peptide bond. The polypeptide is Translation initiation factor 5A (Methanococcus maripaludis (strain DSM 14266 / JCM 13030 / NBRC 101832 / S2 / LL)).